A 203-amino-acid polypeptide reads, in one-letter code: Holliday junction branch migration complex subunit RuvA (203 aa).

A domain I region spans residues Met1 to Asn64. Positions Asn65–Pro142 are domain II. The tract at residues Ala143–Pro154 is flexible linker. Residues Ala155 to Leu203 are domain III.

Belongs to the RuvA family. In terms of assembly, homotetramer. Forms an RuvA(8)-RuvB(12)-Holliday junction (HJ) complex. HJ DNA is sandwiched between 2 RuvA tetramers; dsDNA enters through RuvA and exits via RuvB. An RuvB hexamer assembles on each DNA strand where it exits the tetramer. Each RuvB hexamer is contacted by two RuvA subunits (via domain III) on 2 adjacent RuvB subunits; this complex drives branch migration. In the full resolvosome a probable DNA-RuvA(4)-RuvB(12)-RuvC(2) complex forms which resolves the HJ.

The protein resides in the cytoplasm. In terms of biological role, the RuvA-RuvB-RuvC complex processes Holliday junction (HJ) DNA during genetic recombination and DNA repair, while the RuvA-RuvB complex plays an important role in the rescue of blocked DNA replication forks via replication fork reversal (RFR). RuvA specifically binds to HJ cruciform DNA, conferring on it an open structure. The RuvB hexamer acts as an ATP-dependent pump, pulling dsDNA into and through the RuvAB complex. HJ branch migration allows RuvC to scan DNA until it finds its consensus sequence, where it cleaves and resolves the cruciform DNA. This Cronobacter sakazakii (strain ATCC BAA-894) (Enterobacter sakazakii) protein is Holliday junction branch migration complex subunit RuvA.